Reading from the N-terminus, the 652-residue chain is Proline-rich receptor-like protein kinase PERK1 (652 aa).

A disordered region spans residues 1–137; that stretch reads MSTAPSPGTT…PPSDSSDGLS (137 aa). The Extracellular portion of the chain corresponds to 1–139; the sequence is MSTAPSPGTT…SDSSDGLSTG (139 aa). The span at 8-19 shows a compositional bias: pro residues; the sequence is GTTPSPSPPSPP. 2 N-linked (GlcNAc...) asparagine glycosylation sites follow: asparagine 21 and asparagine 50. Residues 26–112 show a composition bias toward pro residues; it reads TPPPAASSPP…PSPNQGPPNT (87 aa). Residues 113 to 137 are compositionally biased toward low complexity; that stretch reads PSGSTPRTPSNTKPSPPSDSSDGLS. A helical transmembrane segment spans residues 140 to 160; the sequence is VVVGIAIGGVAILVILTLICL. At 161 to 652 the chain is on the cytoplasmic side; the sequence is LCKKKRRRRH…TGQGYSGPSL (492 aa). Residues 169-251 are disordered; the sequence is RHDDEAAYYV…GGSDYSDLPV (83 aa). Polar residues predominate over residues 203–213; it reads NASRPSDNHVV. The segment covering 216–236 has biased composition (pro residues); it reads LPPPKPPSPPRKPPPPPPPPA. At threonine 269 the chain carries Phosphothreonine. The 280-residue stretch at 280 to 559 folds into the Protein kinase domain; sequence FSEANLLGQG…VRALEGNVSL (280 aa). Residues 286-294 and lysine 308 each bind ATP; that span reads LGQGGFGYV. Residue tyrosine 353 is modified to Phosphotyrosine. Aspartate 404 (proton acceptor) is an active-site residue. Serine 408 and serine 437 each carry phosphoserine. Phosphothreonine occurs at positions 438 and 443. Position 451 is a phosphotyrosine (tyrosine 451). The span at 605-616 shows a compositional bias: polar residues; that stretch reads YGTTGEYSNPTS. The tract at residues 605 to 652 is disordered; that stretch reads YGTTGEYSNPTSDYGLYPSGSSSEGQATREMEMGKIKKTGQGYSGPSL.

It belongs to the protein kinase superfamily. Ser/Thr protein kinase family. As to expression, mostly expressed in inflorescence bolt, flower buds and siliques, and, to a lower extent, in roots, seedlings and leaves.

It is found in the cell membrane. The enzyme catalyses L-seryl-[protein] + ATP = O-phospho-L-seryl-[protein] + ADP + H(+). The catalysed reaction is L-threonyl-[protein] + ATP = O-phospho-L-threonyl-[protein] + ADP + H(+). The sequence is that of Proline-rich receptor-like protein kinase PERK1 (PERK1) from Arabidopsis thaliana (Mouse-ear cress).